Consider the following 266-residue polypeptide: Type 1 encapsulin shell protein (266 aa).

This sequence belongs to the encapsulin family. Family 1 subfamily. In terms of assembly, this encapsulin nanocompartment is formed by 60 subunits; monomers form 12 pentamers which assemble to form shells. Shells are loaded with 4 encapsulated ferritin-like protein decamers (EncFtn) in a tetrahedral arrangement. A 3 nm gap is consistently seen between the shell and the cargo.

The protein resides in the encapsulin nanocompartment. In terms of biological role, shell component of a type 1 encapsulin nanocompartment. Assembles into proteinaceous shells about 21 nm in diameter. Small pores form at, or close to, the 2-, 3-, and 5-fold symmetry axes. Data analysis suggests the 5-fold pores open and close with maximal and minimal aperatures of 15 and 5 Angstroms. Cargo protein Fer (ferritin-like protein, probably stores iron) is targeted to the interior via its C-terminal extension; empty intact shells can be isolated in the absence of cargo protein. This chain is Type 1 encapsulin shell protein, found in Haliangium ochraceum (strain DSM 14365 / JCM 11303 / SMP-2).